The chain runs to 411 residues: Putative acid phosphatase 10 (411 aa).

His33 serves as the catalytic Nucleophile. Asp313 functions as the Proton donor in the catalytic mechanism. An intrachain disulfide couples Cys379 to Cys385.

It belongs to the histidine acid phosphatase family.

It carries out the reaction a phosphate monoester + H2O = an alcohol + phosphate. The protein is Putative acid phosphatase 10 (pho-10) of Caenorhabditis elegans.